The primary structure comprises 334 residues: Glucan endo-1,3-beta-glucosidase GII (334 aa).

An N-terminal signal peptide occupies residues 1–28 (MARKDVASMFAAALFIGAFAAVPTSVQS). The Proton donor role is filled by Glu-122. Glu-259 acts as the Nucleophile in catalysis.

The protein belongs to the glycosyl hydrolase 17 family.

The enzyme catalyses Hydrolysis of (1-&gt;3)-beta-D-glucosidic linkages in (1-&gt;3)-beta-D-glucans.. In terms of biological role, may provide a degree of protection against microbial invasion of germinated barley grain through its ability to degrade fungal cell wall polysaccharides. Hydrolyzes laminarin in vitro. This chain is Glucan endo-1,3-beta-glucosidase GII, found in Hordeum vulgare (Barley).